Consider the following 455-residue polypeptide: Probable pectate lyase 6 (455 aa).

A signal peptide spans Met1–Ala25. Asn55 and Asn75 each carry an N-linked (GlcNAc...) asparagine glycan. Ca(2+)-binding residues include Asp247, Asp271, and Asp275. Arg327 is a catalytic residue.

The protein belongs to the polysaccharide lyase 1 family. Requires Ca(2+) as cofactor.

It catalyses the reaction Eliminative cleavage of (1-&gt;4)-alpha-D-galacturonan to give oligosaccharides with 4-deoxy-alpha-D-galact-4-enuronosyl groups at their non-reducing ends.. It functions in the pathway glycan metabolism; pectin degradation; 2-dehydro-3-deoxy-D-gluconate from pectin: step 2/5. The chain is Probable pectate lyase 6 from Arabidopsis thaliana (Mouse-ear cress).